We begin with the raw amino-acid sequence, 445 residues long: Ribosomal protein uS12 methylthiotransferase RimO (445 aa).

Residues 4–119 (IKVALVSLGC…LLESIKVFLK (116 aa)) enclose the MTTase N-terminal domain. [4Fe-4S] cluster-binding residues include C13, C48, C82, C156, C160, and C163. The 231-residue stretch at 142–372 (TTPTYTAYVR…MILQQSISKD (231 aa)) folds into the Radical SAM core domain. Residues 375 to 441 (KEKIGKTYEV…EYDLIGVVYN (67 aa)) form the TRAM domain.

Belongs to the methylthiotransferase family. RimO subfamily. The cofactor is [4Fe-4S] cluster.

It localises to the cytoplasm. The enzyme catalyses L-aspartate(89)-[ribosomal protein uS12]-hydrogen + (sulfur carrier)-SH + AH2 + 2 S-adenosyl-L-methionine = 3-methylsulfanyl-L-aspartate(89)-[ribosomal protein uS12]-hydrogen + (sulfur carrier)-H + 5'-deoxyadenosine + L-methionine + A + S-adenosyl-L-homocysteine + 2 H(+). Functionally, catalyzes the methylthiolation of an aspartic acid residue of ribosomal protein uS12. This is Ribosomal protein uS12 methylthiotransferase RimO from Clostridium botulinum (strain ATCC 19397 / Type A).